The primary structure comprises 514 residues: ATP synthase subunit alpha (514 aa).

170–177 contributes to the ATP binding site; it reads GDRQIGKT.

It belongs to the ATPase alpha/beta chains family. As to quaternary structure, F-type ATPases have 2 components, CF(1) - the catalytic core - and CF(0) - the membrane proton channel. CF(1) has five subunits: alpha(3), beta(3), gamma(1), delta(1), epsilon(1). CF(0) has three main subunits: a(1), b(2) and c(9-12). The alpha and beta chains form an alternating ring which encloses part of the gamma chain. CF(1) is attached to CF(0) by a central stalk formed by the gamma and epsilon chains, while a peripheral stalk is formed by the delta and b chains.

Its subcellular location is the cell inner membrane. The catalysed reaction is ATP + H2O + 4 H(+)(in) = ADP + phosphate + 5 H(+)(out). Functionally, produces ATP from ADP in the presence of a proton gradient across the membrane. The alpha chain is a regulatory subunit. The sequence is that of ATP synthase subunit alpha from Pseudomonas fluorescens (strain Pf0-1).